The following is a 339-amino-acid chain: Protein RecA (339 aa).

73–80 (GPESSGKT) lines the ATP pocket.

This sequence belongs to the RecA family.

The protein resides in the cytoplasm. Functionally, can catalyze the hydrolysis of ATP in the presence of single-stranded DNA, the ATP-dependent uptake of single-stranded DNA by duplex DNA, and the ATP-dependent hybridization of homologous single-stranded DNAs. It interacts with LexA causing its activation and leading to its autocatalytic cleavage. The polypeptide is Protein RecA (Mycoplasmopsis pulmonis (strain UAB CTIP) (Mycoplasma pulmonis)).